Here is a 138-residue protein sequence, read N- to C-terminus: Vesicle transport protein GOT1B (138 aa).

At M1 the chain carries N-acetylmethionine. The Cytoplasmic segment spans residues 1 to 9 (MISLTDTQK). A helical transmembrane segment spans residues 10–30 (IGMGLTGFGVFFLFFGMILFF). The Lumenal portion of the chain corresponds to 31–32 (DK). Residues 33–53 (ALLAIGNVLFVAGLAFVIGLE) form a helical membrane-spanning segment. The Cytoplasmic portion of the chain corresponds to 54–68 (RTFRFFFQKHKMKAT). A helical membrane pass occupies residues 69–89 (GFFLGGVFVVLIGWPLIGMIF). A topological domain (lumenal) is located at residue E90. A helical transmembrane segment spans residues 91-109 (IYGFFLLFRGFFPVVVGFI). Residues 110 to 138 (RRVPVLGSLLNLPGIRSFVDKVGESNNMV) are Cytoplasmic-facing.

This sequence belongs to the GOT1 family.

The protein resides in the golgi apparatus membrane. May be involved in fusion of ER-derived transport vesicles with the Golgi complex. The polypeptide is Vesicle transport protein GOT1B (Bos taurus (Bovine)).